A 156-amino-acid polypeptide reads, in one-letter code: Cytochrome c-type biogenesis protein CcmE 1 (156 aa).

Topologically, residues 1–8 (MNATRKQR) are cytoplasmic. A helical; Signal-anchor for type II membrane protein transmembrane segment spans residues 9 to 29 (LWLVIGVLAAAALAVTLIVFA). Residues 30–156 (LQRNMSYLFT…ATVAPLTAPR (127 aa)) lie on the Periplasmic side of the membrane. Heme is bound by residues histidine 123 and tyrosine 127.

This sequence belongs to the CcmE/CycJ family.

It is found in the cell inner membrane. In terms of biological role, heme chaperone required for the biogenesis of c-type cytochromes. Transiently binds heme delivered by CcmC and transfers the heme to apo-cytochromes in a process facilitated by CcmF and CcmH. The protein is Cytochrome c-type biogenesis protein CcmE 1 of Xanthomonas axonopodis pv. citri (strain 306).